The primary structure comprises 307 residues: Ribonuclease Z (307 aa).

H63, H65, D67, H68, H141, D212, and H270 together coordinate Zn(2+). D67 functions as the Proton acceptor in the catalytic mechanism.

Belongs to the RNase Z family. Homodimer. Zn(2+) serves as cofactor.

It carries out the reaction Endonucleolytic cleavage of RNA, removing extra 3' nucleotides from tRNA precursor, generating 3' termini of tRNAs. A 3'-hydroxy group is left at the tRNA terminus and a 5'-phosphoryl group is left at the trailer molecule.. Zinc phosphodiesterase, which displays some tRNA 3'-processing endonuclease activity. Probably involved in tRNA maturation, by removing a 3'-trailer from precursor tRNA. The polypeptide is Ribonuclease Z (Bacillus cereus (strain ATCC 10987 / NRS 248)).